The primary structure comprises 652 residues: Engulfment and cell motility protein 3 (652 aa).

An ELMO domain is found at 307–479; that stretch reads EQREQLQALR…VVREQLARTL (173 aa).

As to quaternary structure, probably interacts directly with the SH3-domain of DOCK1 via its SH3-binding site. Part of a complex with DOCK1 and RAC1. Interacts with ADGRB3.

Its subcellular location is the cytoplasm. In terms of biological role, involved in cytoskeletal rearrangements required for phagocytosis of apoptotic cells and cell motility. Acts in association with DOCK1 and CRK. Was initially proposed to be required in complex with DOCK1 to activate Rac Rho small GTPases. May enhance the guanine nucleotide exchange factor (GEF) activity of DOCK1. This chain is Engulfment and cell motility protein 3 (ELMO3), found in Bos taurus (Bovine).